The following is a 108-amino-acid chain: CDGSH iron-sulfur domain-containing protein 1 (108 aa).

A helical; Signal-anchor for type III membrane protein transmembrane segment spans residues 13-31 (WIAAVTFAAGTAALGYLAY). Residues 32 to 108 (KKFYAKESRT…GPLIIKKKET (77 aa)) are Cytoplasmic-facing. A Glycyl lysine isopeptide (Lys-Gly) (interchain with G-Cter in ubiquitin) cross-link involves residue lysine 42. Lysine 55 serves as the catalytic Schiff-base intermediate with pyridoxal 5'-phosphate. N6-acetyllysine; alternate is present on residues lysine 55 and lysine 68. Residues lysine 55 and lysine 68 each participate in a glycyl lysine isopeptide (Lys-Gly) (interchain with G-Cter in ubiquitin); alternate cross-link. Residues cysteine 72 and cysteine 74 each coordinate [2Fe-2S] cluster. Glycyl lysine isopeptide (Lys-Gly) (interchain with G-Cter in ubiquitin) cross-links involve residues lysine 78 and lysine 79. Residues cysteine 83 and histidine 87 each coordinate [2Fe-2S] cluster. Lysine 89 participates in a covalent cross-link: Glycyl lysine isopeptide (Lys-Gly) (interchain with G-Cter in ubiquitin). Position 104 is an N6-acetyllysine; alternate (lysine 104). Lysine 104 participates in a covalent cross-link: Glycyl lysine isopeptide (Lys-Gly) (interchain with G-Cter in ubiquitin); alternate. Glycyl lysine isopeptide (Lys-Gly) (interchain with G-Cter in ubiquitin) cross-links involve residues lysine 105 and lysine 106.

The protein belongs to the CISD protein family. As to quaternary structure, homodimer. [2Fe-2S] cluster is required as a cofactor. Pyridoxal 5'-phosphate serves as cofactor. Ubiquitinated by PRKN during mitophagy, leading to its degradation and enhancement of mitophagy. Deubiquitinated by USP30.

The protein resides in the mitochondrion outer membrane. The catalysed reaction is L-cysteine + 2-oxoglutarate = 2-oxo-3-sulfanylpropanoate + L-glutamate. In terms of biological role, L-cysteine transaminase that catalyzes the reversible transfer of the amino group from L-cysteine to the alpha-keto acid 2-oxoglutarate to respectively form 2-oxo-3-sulfanylpropanoate and L-glutamate. The catalytic cycle occurs in the presence of pyridoxal 5'-phosphate (PLP) cofactor that facilitates transamination by initially forming an internal aldimine with the epsilon-amino group of active site Lys-55 residue on the enzyme (PLP-enzyme aldimine), subsequently displaced by formation of an external aldimine with the substrate amino group (PLP-L-cysteine aldimine). The external aldimine is further deprotonated to form a carbanion intermediate, which in the presence of 2-oxoglutarate regenerates PLP yielding final products 2-oxo-3-sulfanylpropanoate and L-glutamate. The proton transfer in carbanion intermediate is suggested to be controlled by the active site lysine residue, whereas PLP stabilizes carbanion structure through electron delocalization, also known as the electron sink effect. Plays a key role in regulating maximal capacity for electron transport and oxidative phosphorylation. May be involved in iron-sulfur cluster shuttling and/or in redox reactions. Can transfer the [2Fe-2S] cluster to an apo-acceptor protein only when in the oxidation state, likely serving as a redox sensor that regulates mitochondrial iron-sulfur cluster assembly and iron trafficking upon oxidative stress. The sequence is that of CDGSH iron-sulfur domain-containing protein 1 (Cisd1) from Rattus norvegicus (Rat).